The chain runs to 253 residues: Zinc import ATP-binding protein ZnuC (253 aa).

An ABC transporter domain is found at 6-227 (VTLNKISVTF…FGNRGAEQLA (222 aa)). An ATP-binding site is contributed by 38-45 (GPNGAGKS).

The protein belongs to the ABC transporter superfamily. Zinc importer (TC 3.A.1.15.5) family. The complex is composed of two ATP-binding proteins (ZnuC), two transmembrane proteins (ZnuB) and a solute-binding protein (ZnuA).

It localises to the cell inner membrane. The catalysed reaction is Zn(2+)(out) + ATP(in) + H2O(in) = Zn(2+)(in) + ADP(in) + phosphate(in) + H(+)(in). In terms of biological role, part of the ABC transporter complex ZnuABC involved in zinc import. Responsible for energy coupling to the transport system. The protein is Zinc import ATP-binding protein ZnuC of Yersinia pseudotuberculosis serotype I (strain IP32953).